Reading from the N-terminus, the 405-residue chain is L-carnitine CoA-transferase (405 aa).

Residues lysine 97 and arginine 104 each coordinate CoA. Catalysis depends on aspartate 169, which acts as the Nucleophile.

The protein belongs to the CoA-transferase III family. CaiB subfamily. As to quaternary structure, homodimer.

The protein resides in the cytoplasm. The enzyme catalyses crotonobetainyl-CoA + (R)-carnitine = crotonobetaine + (R)-carnitinyl-CoA. It catalyses the reaction 4-(trimethylamino)butanoyl-CoA + (R)-carnitine = (R)-carnitinyl-CoA + 4-(trimethylamino)butanoate. The protein operates within amine and polyamine metabolism; carnitine metabolism. Catalyzes the reversible transfer of the CoA moiety from gamma-butyrobetainyl-CoA to L-carnitine to generate L-carnitinyl-CoA and gamma-butyrobetaine. Is also able to catalyze the reversible transfer of the CoA moiety from gamma-butyrobetainyl-CoA or L-carnitinyl-CoA to crotonobetaine to generate crotonobetainyl-CoA. The polypeptide is L-carnitine CoA-transferase (Salmonella gallinarum (strain 287/91 / NCTC 13346)).